The following is a 420-amino-acid chain: Cytochrome P-450 monooxygenase DoxA (420 aa).

Residue cysteine 367 coordinates heme.

It belongs to the cytochrome P450 family. In terms of assembly, monomer. It depends on heme as a cofactor.

The protein localises to the cytoplasm. It catalyses the reaction 13-deoxydaunorubicin + NADPH + O2 + H(+) = 13-dihydrodaunorubicin + NADP(+) + H2O. The enzyme catalyses 13-dihydrodaunorubicin + NADPH + O2 + H(+) = daunorubicin + NADP(+) + 2 H2O. It carries out the reaction 13-deoxycarminomycin + NADPH + O2 + H(+) = 13-dihydrocarminomycin + NADP(+) + H2O. The catalysed reaction is 13-dihydrocarminomycin + NADPH + O2 + H(+) = carminomycin + NADP(+) + 2 H2O. It catalyses the reaction daunorubicin + NADPH + O2 + H(+) = doxorubicin + NADP(+) + H2O. It functions in the pathway antibiotic biosynthesis; daunorubicin biosynthesis. Its pathway is antibiotic biosynthesis; carminomycin biosynthesis. The protein operates within antibiotic biosynthesis; doxorubicin biosynthesis. Its function is as follows. Involved in the biosynthesis of the anthracyclines carminomycin, daunorubicin (daunomycin) and doxorubicin (adriamycin) which are aromatic polyketide antibiotics that exhibit high cytotoxicity and are widely applied in the chemotherapy of a variety of cancers. In vivo, DoxA catalyzes the C-13 hydroxylation of 13-deoxycarminomycin and 13-deoxydaunorubicin to yield 13-dihydrocarminomycin and 13-dihydrodaunorubicin, respectively, as well as the oxidation of these 13-dihydro-anthracyclines to their respective 13-keto forms, carminomycin and daunorubicin. In vivo, it also catalyzes the C-14 hydroxylation of daunorubicin to form doxorubicin. It can only use NADP. DoxA acts jointly with DnrV. The protein is Cytochrome P-450 monooxygenase DoxA (doxA) of Streptomyces peucetius subsp. caesius.